The sequence spans 76 residues: Conotoxin Cal29b (76 aa).

The first 43 residues, 1–43, serve as a signal peptide directing secretion; sequence MKLTCVLIVAVLILAACQFTAANMARYGKTQIARSDVKSIDAR.

The protein belongs to the conotoxin O1 superfamily. May contain 4 disulfide bonds. In terms of tissue distribution, expressed by the venom duct.

The protein resides in the secreted. In terms of biological role, is able to inhibit the growth of Mycobacterium tuberculosis (MIC=0.22-3.52 uM against strain H37Rv and 2 multidrug-resistant strains). May also show neurotoxic activity. This is Conotoxin Cal29b from Californiconus californicus (California cone).